Consider the following 236-residue polypeptide: UPF0257 lipoprotein YnfC (236 aa).

The signal sequence occupies residues 1–16 (MKYKLLPCLLAIFLTG). A lipid anchor (N-palmitoyl cysteine) is attached at Cys-17. Cys-17 carries the S-diacylglycerol cysteine lipid modification.

This sequence belongs to the UPF0257 family.

The protein resides in the cell membrane. The protein is UPF0257 lipoprotein YnfC of Escherichia coli O17:K52:H18 (strain UMN026 / ExPEC).